Reading from the N-terminus, the 912-residue chain is Probable dipeptidyl-aminopeptidase B (912 aa).

The segment at 1–74 (MSSALSPEGD…GPFLGPGASL (74 aa)) is disordered. The Cytoplasmic portion of the chain corresponds to 1–85 (MSSALSPEGD…REPMDRGLRR (85 aa)). Residues 16–27 (DSLSSVSTTSLV) show a composition bias toward low complexity. The span at 30 to 50 (RIQEKTEMDADNDKEKDPRAL) shows a compositional bias: basic and acidic residues. Residues 51-63 (DDEDPLRDEDDLE) show a composition bias toward acidic residues. A helical; Signal-anchor for type II membrane protein transmembrane segment spans residues 86 to 106 (ILIIVAVVFIGGWLAGLGIFI). Topologically, residues 107–912 (ASGSYHHESD…KRHMVPQALV (806 aa)) are vacuolar. Asn344 carries an N-linked (GlcNAc...) asparagine glycan. Catalysis depends on Ser749, which acts as the Charge relay system. Asn808 carries N-linked (GlcNAc...) asparagine glycosylation. Active-site charge relay system residues include Asp826 and His859. The tract at residues 892–912 (PQPQKDPVEKEKRHMVPQALV) is disordered.

Belongs to the peptidase S9B family.

It is found in the vacuole membrane. The catalysed reaction is Release of an N-terminal dipeptide, Xaa-Yaa-|-Zaa-, from a polypeptide, preferentially when Yaa is Pro, provided Zaa is neither Pro nor hydroxyproline.. Its function is as follows. Type IV dipeptidyl-peptidase which removes N-terminal dipeptides sequentially from polypeptides having unsubstituted N-termini provided that the penultimate residue is proline. The polypeptide is Probable dipeptidyl-aminopeptidase B (DAPB) (Fusarium vanettenii (strain ATCC MYA-4622 / CBS 123669 / FGSC 9596 / NRRL 45880 / 77-13-4) (Fusarium solani subsp. pisi)).